The primary structure comprises 331 residues: UPF0284 protein PF0303 (331 aa).

This sequence belongs to the UPF0284 family.

The sequence is that of UPF0284 protein PF0303 from Pyrococcus furiosus (strain ATCC 43587 / DSM 3638 / JCM 8422 / Vc1).